Consider the following 384-residue polypeptide: GDP/UDP-N,N'-diacetylbacillosamine 2-epimerase (hydrolyzing) (384 aa).

Belongs to the UDP-N-acetylglucosamine 2-epimerase family.

It catalyses the reaction GDP-N,N'-diacetylbacillosamine + H2O = 2,4-diacetamido-2,4,6-trideoxy-alpha-D-mannopyranose + GDP + H(+). It carries out the reaction UDP-N,N'-diacetylbacillosamine + H2O = 2,4-diacetamido-2,4,6-trideoxy-alpha-D-mannopyranose + UDP + H(+). Involved in biosynthesis of legionaminic acid (5,7-diamino-3,5,7,9-tetradeoxy-D-glycero-D-galacto-non-2-ulosonic acid)(Leg), a sialic acid-like derivative that is incorporated into flagellin via O-linkage to Ser/Thr. Catalyzes the conversion of GDP-N,N'-diacetylbacillosamine (Bac2Ac4Ac) into 2,4-diacetamido-2,4,6-trideoxymannose and GDP. It can also use UDP-N,N'-diacetylbacillosamine however it generates small quantities of 2,4-diacetamido-2,4,6-trideoxymannose. In Campylobacter jejuni subsp. jejuni serotype O:2 (strain ATCC 700819 / NCTC 11168), this protein is GDP/UDP-N,N'-diacetylbacillosamine 2-epimerase (hydrolyzing) (legG).